A 207-amino-acid chain; its full sequence is Vascular endothelial growth factor B (207 aa).

The first 21 residues, 1–21, serve as a signal peptide directing secretion; the sequence is MSPLLRRLLLAALLQLAPAQA. 3 cysteine pairs are disulfide-bonded: Cys-47–Cys-89, Cys-78–Cys-122, and Cys-82–Cys-124. A compositionally biased stretch (basic and acidic residues) spans 122 to 139; the sequence is CECRPKKKDSAVKPDRAA. The interval 122-207 is disordered; the sequence is CECRPKKKDS…AASSVAKGGA (86 aa). Low complexity predominate over residues 174–207; the sequence is PSAHAAPSTTSALTPGPAAAAADAAASSVAKGGA.

Belongs to the PDGF/VEGF growth factor family. As to quaternary structure, homodimer; disulfide-linked. Can also form heterodimer with VEGF. In terms of processing, VEGF-B186 is O-glycosylated. Expressed in all tissues except liver. Highest levels found in heart, skeletal muscle and pancreas.

The protein localises to the secreted. Its function is as follows. Growth factor for endothelial cells. VEGF-B167 binds heparin and neuropilin-1 whereas the binding to neuropilin-1 of VEGF-B186 is regulated by proteolysis. The sequence is that of Vascular endothelial growth factor B (VEGFB) from Homo sapiens (Human).